The sequence spans 192 residues: Ras-like protein 2 (192 aa).

12–19 is a GTP binding site; that stretch reads GGGGVGKS. The Effector region signature appears at 34–42; sequence YDPTIEDSY. The S-palmitoyl cysteine moiety is linked to residue cysteine 46. GTP is bound by residues 59-63 and 118-121; these read DTAGQ and NKCD. 2 S-palmitoyl cysteine lipidation sites follow: cysteine 120 and cysteine 147. Cysteine 189 carries the cysteine methyl ester modification. Residue cysteine 189 is the site of S-farnesyl cysteine attachment. Positions 190-192 are cleaved as a propeptide — removed in mature form; the sequence is CLM.

This sequence belongs to the small GTPase superfamily. Ras family. As to quaternary structure, interacts with hzg.

The protein localises to the cell membrane. It catalyses the reaction GTP + H2O = GDP + phosphate + H(+). With respect to regulation, alternates between an inactive form bound to GDP and an active form bound to GTP. Activated by a guanine nucleotide-exchange factor (GEF) and inactivated by a GTPase-activating protein (GAP). May be involved in endocytic processes and/or other transport pathways mediated by vesicle trafficking. May interact functionally with ROP protein. Ras proteins bind GDP/GTP and possess intrinsic GTPase activity. In Drosophila melanogaster (Fruit fly), this protein is Ras-like protein 2 (Ras64B).